The following is a 303-amino-acid chain: Coenzyme PQQ synthesis protein B (303 aa).

Belongs to the PqqB family.

Its pathway is cofactor biosynthesis; pyrroloquinoline quinone biosynthesis. May be involved in the transport of PQQ or its precursor to the periplasm. This chain is Coenzyme PQQ synthesis protein B, found in Pseudomonas putida (strain GB-1).